A 483-amino-acid polypeptide reads, in one-letter code: FAD-linked oxidoreductase pgmH (483 aa).

The region spanning 54 to 215 is the FAD-binding PCMH-type domain; it reads SIRLATLVVY…TEFKYRVHKQ (162 aa).

This sequence belongs to the oxygen-dependent FAD-linked oxidoreductase family. Requires FAD as cofactor.

The protein operates within pigment biosynthesis. It functions in the pathway secondary metabolite biosynthesis. Its function is as follows. FAD-linked oxidoreductase; part of the gene cluster that mediates the biosynthesis of pleosporalin A, ascomycone A, as well as a third cryptic naphthoquinone derived pigment, all responsible for the coloration of conidia. Essential for the production of pleosporalin A, but not the 2 other final products. The pathway begins with the biosynthesis of the cyclized heptaketide 3-acetonyl-1,6,8-trihydroxy-2-naphthaldehyde by the NR-PKS pgmA. The C-6 hydroxyl group is further methylated by the O-methyltransferase pgmB to yield fusarubinaldehyde which is in turn oxidized by the cytochrome P450 monooxygenase pgmC at C-9. The C-1 hydroxyl group is then methylated spontaneously. Although pgmE, pgmD and pgmH are essential for the production of pleosporalin A, it is not the case for the 2 other final products and it remains difficult to assign a specific function to each enzyme. PgmF and pgmG seem not to be involved in pigment biosynthesis although they were regulated by the cluster-specific transcription factor pgmR. In Aspergillus terreus (strain NIH 2624 / FGSC A1156), this protein is FAD-linked oxidoreductase pgmH.